The chain runs to 46 residues: uncharacterized protein (46 aa).

The segment at 1-46 (MEVTPLETGRARSHQKASTAAQPHAADEKMTGSTARRYLSQDHQSV) is disordered.

This is an uncharacterized protein from Treponema pallidum (strain Nichols).